Here is a 269-residue protein sequence, read N- to C-terminus: 2' cyclic ADP-D-ribose synthase AbTIR (269 aa).

The stretch at 31 to 99 (LKTKLSEISR…KQQKDEIEHQ (69 aa)) forms a coiled coil. Residues 133 to 266 (PEYDLFISHA…EIAHQLADVI (134 aa)) form the TIR domain. NAD(+) contacts are provided by S143, K172, and K202. E208 is an active-site residue. K245 contributes to the NAD(+) binding site.

In terms of assembly, homodimer. In the presence of NAD(+) analog 8-amino-isoquinoline adenine dinucleotide (3AD) forms filaments with 3AD between monomers; conformational changes occur upon 3AD binding.

It catalyses the reaction NAD(+) = 2'cADPR + nicotinamide + H(+). The enzyme catalyses NAD(+) + H2O = ADP-D-ribose + nicotinamide + H(+). The catalysed reaction is NADP(+) + H2O = ADP-D-ribose 2'-phosphate + nicotinamide + H(+). Functionally, NAD(+) hydrolase (NADase) that catalyzes cleavage of NAD(+) into ADP-D-ribose (ADPR) and nicotinamide. In addition to ADPR, also generates a cyclization variant of cyclic ADPR (cADPR), termed 2'cADPR (v-cADPR). Cleaves NADP(+), but does not cyclize the product. The polypeptide is 2' cyclic ADP-D-ribose synthase AbTIR (Acinetobacter baumannii (strain 1295743)).